We begin with the raw amino-acid sequence, 357 residues long: UDP-N-acetylglucosamine--N-acetylmuramyl-(pentapeptide) pyrophosphoryl-undecaprenol N-acetylglucosamine transferase (357 aa).

UDP-N-acetyl-alpha-D-glucosamine contacts are provided by residues 14–16 (TGG), Asn126, Arg162, Ser190, Ile246, 265–270 (ALTVCE), and Gln290.

Belongs to the glycosyltransferase 28 family. MurG subfamily.

It is found in the cell inner membrane. It carries out the reaction di-trans,octa-cis-undecaprenyl diphospho-N-acetyl-alpha-D-muramoyl-L-alanyl-D-glutamyl-meso-2,6-diaminopimeloyl-D-alanyl-D-alanine + UDP-N-acetyl-alpha-D-glucosamine = di-trans,octa-cis-undecaprenyl diphospho-[N-acetyl-alpha-D-glucosaminyl-(1-&gt;4)]-N-acetyl-alpha-D-muramoyl-L-alanyl-D-glutamyl-meso-2,6-diaminopimeloyl-D-alanyl-D-alanine + UDP + H(+). It functions in the pathway cell wall biogenesis; peptidoglycan biosynthesis. Cell wall formation. Catalyzes the transfer of a GlcNAc subunit on undecaprenyl-pyrophosphoryl-MurNAc-pentapeptide (lipid intermediate I) to form undecaprenyl-pyrophosphoryl-MurNAc-(pentapeptide)GlcNAc (lipid intermediate II). The sequence is that of UDP-N-acetylglucosamine--N-acetylmuramyl-(pentapeptide) pyrophosphoryl-undecaprenol N-acetylglucosamine transferase from Histophilus somni (strain 129Pt) (Haemophilus somnus).